The following is a 365-amino-acid chain: Peptide chain release factor 2 (365 aa).

Glutamine 252 is subject to N5-methylglutamine.

It belongs to the prokaryotic/mitochondrial release factor family. Post-translationally, methylated by PrmC. Methylation increases the termination efficiency of RF2.

The protein resides in the cytoplasm. Functionally, peptide chain release factor 2 directs the termination of translation in response to the peptide chain termination codons UGA and UAA. The chain is Peptide chain release factor 2 from Pectobacterium atrosepticum (strain SCRI 1043 / ATCC BAA-672) (Erwinia carotovora subsp. atroseptica).